The sequence spans 464 residues: Galactose-proton symporter (464 aa).

At methionine 1–threonine 15 the chain is on the cytoplasmic side. A helical membrane pass occupies residues phenylalanine 16–isoleucine 36. Over alanine 37 to tryptophan 56 the chain is Periplasmic. The helical transmembrane segment at valine 57 to phenylalanine 77 threads the bilayer. The Cytoplasmic segment spans residues lysine 78 to serine 84. A helical membrane pass occupies residues leucine 85–valine 105. Residues glutamate 106 to arginine 112 are Periplasmic-facing. The helical transmembrane segment at valine 113–isoleucine 133 threads the bilayer. Over alanine 134–arginine 139 the chain is Cytoplasmic. The chain crosses the membrane as a helical span at residues glycine 140–serine 160. The Periplasmic segment spans residues aspartate 161 to arginine 171. The helical transmembrane segment at tryptophan 172–proline 192 threads the bilayer. Topologically, residues aspartate 193 to arginine 250 are cytoplasmic. A helical transmembrane segment spans residues alanine 251 to methionine 271. At tyrosine 272–methionine 290 the chain is on the periplasmic side. Residues tryptophan 291 to valine 311 form a helical membrane-spanning segment. Residues aspartate 312–threonine 321 lie on the Cytoplasmic side of the membrane. The chain crosses the membrane as a helical span at residues leucine 322–isoleucine 342. Residues histidine 343–alanine 351 lie on the Periplasmic side of the membrane. The helical transmembrane segment at isoleucine 352–valine 372 threads the bilayer. Residues leucine 373–asparagine 394 are Cytoplasmic-facing. A helical transmembrane segment spans residues tryptophan 395–alanine 415. Asparagine 416 is a topological domain (periplasmic). Residues threonine 417–proline 437 traverse the membrane as a helical segment. At glutamate 438–aspartate 464 the chain is on the cytoplasmic side.

Belongs to the major facilitator superfamily. Sugar transporter (TC 2.A.1.1) family.

The protein localises to the cell inner membrane. Its function is as follows. Uptake of galactose across the boundary membrane with the concomitant transport of protons into the cell (symport system). In Escherichia coli O6:H1 (strain CFT073 / ATCC 700928 / UPEC), this protein is Galactose-proton symporter (galP).